The following is a 58-amino-acid chain: Potassium channel toxin alpha-KTx 9.9 (58 aa).

An N-terminal signal peptide occupies residues 1–21; that stretch reads KKTSRLFTLVLIVLAMNVMMA. A propeptide spanning residues 22 to 30 is cleaved from the precursor; that stretch reads IISDPVVEA. Intrachain disulfides connect Cys33–Cys49, Cys36–Cys54, and Cys40–Cys56.

The protein belongs to the short scorpion toxin superfamily. Potassium channel inhibitor family. Alpha-KTx 09 subfamily. In terms of tissue distribution, expressed by the venom gland.

The protein localises to the secreted. In terms of biological role, potassium channel inhibitor. The chain is Potassium channel toxin alpha-KTx 9.9 from Buthus israelis (Israeli scorpion).